The chain runs to 286 residues: NFU1 iron-sulfur cluster scaffold homolog, mitochondrial (286 aa).

The N-terminal 66 residues, 1–66 (MSKLLTNTAL…RQIQLSGARN (66 aa)), are a transit peptide targeting the mitochondrion. A nifU region spans residues 182 to 250 (IKELLDTRIR…IPEVESVEQV (69 aa)). Residues C219 and C222 each coordinate [4Fe-4S] cluster.

Belongs to the NifU family.

The protein localises to the mitochondrion. Molecular scaffold for [Fe-S] cluster assembly of mitochondrial iron-sulfur proteins. The polypeptide is NFU1 iron-sulfur cluster scaffold homolog, mitochondrial (Drosophila ananassae (Fruit fly)).